The sequence spans 220 residues: Inner membrane-spanning protein YciB (220 aa).

A run of 6 helical transmembrane segments spans residues 20–40 (EVPP…FFFA), 57–77 (IGAP…IALA), 86–106 (LPIM…LTLW), 123–143 (LFGA…GYVF), 156–176 (KLTL…EVVW), and 187–207 (FKVW…MPLI).

This sequence belongs to the YciB family.

The protein localises to the cell inner membrane. In terms of biological role, plays a role in cell envelope biogenesis, maintenance of cell envelope integrity and membrane homeostasis. The sequence is that of Inner membrane-spanning protein YciB from Brucella anthropi (strain ATCC 49188 / DSM 6882 / CCUG 24695 / JCM 21032 / LMG 3331 / NBRC 15819 / NCTC 12168 / Alc 37) (Ochrobactrum anthropi).